Here is a 95-residue protein sequence, read N- to C-terminus: U6 snRNA-associated Sm-like protein LSm2 (95 aa).

The 75-residue stretch at 2–76 folds into the Sm domain; that stretch reads LFYSFFKSLV…VRYVQLPADE (75 aa). At T79 the chain carries Phosphothreonine.

The protein belongs to the snRNP Sm proteins family. Component of the precatalytic spliceosome (spliceosome B complex). Component of the U4/U6-U5 tri-snRNP complex, a building block of the precatalytic spliceosome (spliceosome B complex). The U4/U6-U5 tri-snRNP complex is composed of the U4, U6 and U5 snRNAs and at least PRPF3, PRPF4, PRPF6, PRPF8, PRPF31, SNRNP200, TXNL4A, SNRNP40, SNRPB, SNRPD1, SNRPD2, SNRPD3, SNRPE, SNRPF, SNRPG, DDX23, CD2BP2, PPIH, SNU13, EFTUD2, SART1 and USP39, plus LSM2, LSM3, LSM4, LSM5, LSM6, LSM7 and LSM8. LSM2, LSM3, LSM4, LSM5, LSM6, LSM7 and LSM8 form a heptameric, ring-shaped subcomplex (the LSM2-8 complex) that is part of the U4/U6-U5 tri-snRNP complex and the precatalytic spliceosome.

The protein localises to the nucleus. Plays a role in pre-mRNA splicing as component of the U4/U6-U5 tri-snRNP complex that is involved in spliceosome assembly, and as component of the precatalytic spliceosome (spliceosome B complex). The heptameric LSM2-8 complex binds specifically to the 3'-terminal U-tract of U6 snRNA. This Homo sapiens (Human) protein is U6 snRNA-associated Sm-like protein LSm2 (LSM2).